We begin with the raw amino-acid sequence, 114 residues long: Large ribosomal subunit protein uL18 (114 aa).

The protein belongs to the universal ribosomal protein uL18 family. Part of the 50S ribosomal subunit; part of the 5S rRNA/L5/L18/L25 subcomplex. Contacts the 5S and 23S rRNAs.

This is one of the proteins that bind and probably mediate the attachment of the 5S RNA into the large ribosomal subunit, where it forms part of the central protuberance. The sequence is that of Large ribosomal subunit protein uL18 from Aster yellows phytoplasma.